Consider the following 118-residue polypeptide: Thioredoxin H3 (118 aa).

At Ala-2 the chain carries N-acetylalanine. Positions Ala-2–Thr-113 constitute a Thioredoxin domain. Residues Cys-39 and Cys-42 each act as nucleophile in the active site. The cysteines at positions 39 and 42 are disulfide-linked.

Belongs to the thioredoxin family. Plant H-type subfamily. Interacts with FBA5 and FBA8. Interacts with FBA6. Interacts with MDH1.

Its subcellular location is the cytoplasm. Thiol-disulfide oxidoreductase that possesses disulfide reductase and insulin disulfide bonds reducing activities. Heat shock causes oligomerization and formation of high molecular weight (HMW) complexes with concomitant functional switching from a disulfide reductase to chaperone. This is Thioredoxin H3 (TRX3) from Arabidopsis thaliana (Mouse-ear cress).